The sequence spans 336 residues: tRNA N6-adenosine threonylcarbamoyltransferase (336 aa).

Fe cation is bound by residues H114 and H118. Substrate contacts are provided by residues L136–G140, D169, G182, D186, and N275. D301 provides a ligand contact to Fe cation.

This sequence belongs to the KAE1 / TsaD family. The cofactor is Fe(2+).

It is found in the cytoplasm. It carries out the reaction L-threonylcarbamoyladenylate + adenosine(37) in tRNA = N(6)-L-threonylcarbamoyladenosine(37) in tRNA + AMP + H(+). Functionally, required for the formation of a threonylcarbamoyl group on adenosine at position 37 (t(6)A37) in tRNAs that read codons beginning with adenine. Is involved in the transfer of the threonylcarbamoyl moiety of threonylcarbamoyl-AMP (TC-AMP) to the N6 group of A37, together with TsaE and TsaB. TsaD likely plays a direct catalytic role in this reaction. This chain is tRNA N6-adenosine threonylcarbamoyltransferase, found in Streptococcus sanguinis (strain SK36).